Here is a 528-residue protein sequence, read N- to C-terminus: Chromosomal replication initiator protein DnaA (528 aa).

Residues 1–104 form a domain I, interacts with DnaA modulators region; it reads MNDDPNALAR…PVDDEPESEA (104 aa). Residues 93 to 159 are disordered; that stretch reads AAPVDDEPES…DFEEVDDDSE (67 aa). Residues 104–123 show a composition bias toward basic and acidic residues; it reads APSRERRPDPEPVHTPRHLE. The domain II stretch occupies residues 105–187; sequence PSRERRPDPE…GPAPAATGGN (83 aa). Acidic residues predominate over residues 149–159; sequence TDFEEVDDDSE. The interval 188–404 is domain III, AAA+ region; it reads SLNAKYTFDT…GALIRVTAFA (217 aa). 4 residues coordinate ATP: Gly232, Gly234, Lys235, and Thr236. Residues 405–528 are domain IV, binds dsDNA; it reads SLNRQPLDLT…TARIKQRSKR (124 aa).

The protein belongs to the DnaA family. As to quaternary structure, oligomerizes as a right-handed, spiral filament on DNA at oriC.

It localises to the cytoplasm. Its function is as follows. Plays an essential role in the initiation and regulation of chromosomal replication. ATP-DnaA binds to the origin of replication (oriC) to initiate formation of the DNA replication initiation complex once per cell cycle. Binds the DnaA box (a 9 base pair repeat at the origin) and separates the double-stranded (ds)DNA. Forms a right-handed helical filament on oriC DNA; dsDNA binds to the exterior of the filament while single-stranded (ss)DNA is stabiized in the filament's interior. The ATP-DnaA-oriC complex binds and stabilizes one strand of the AT-rich DNA unwinding element (DUE), permitting loading of DNA polymerase. After initiation quickly degrades to an ADP-DnaA complex that is not apt for DNA replication. Binds acidic phospholipids. This is Chromosomal replication initiator protein DnaA from Rhodococcus opacus (strain B4).